The primary structure comprises 719 residues: Phosphoribosylformylglycinamidine synthase subunit PurL (719 aa).

Residue His45 is part of the active site. Positions 48 and 87 each coordinate ATP. Glu89 lines the Mg(2+) pocket. Substrate is bound by residues 90 to 93 (SHNH) and Arg112. His91 (proton acceptor) is an active-site residue. Asp113 serves as a coordination point for Mg(2+). Substrate is bound at residue Gln236. Mg(2+) is bound at residue Asp264. Residue 308–310 (ESQ) participates in substrate binding. The ATP site is built by Asn493 and Gly530. Mg(2+) is bound at residue Asn531. Ser533 contributes to the substrate binding site.

Belongs to the FGAMS family. As to quaternary structure, monomer. Part of the FGAM synthase complex composed of 1 PurL, 1 PurQ and 2 PurS subunits.

The protein resides in the cytoplasm. It catalyses the reaction N(2)-formyl-N(1)-(5-phospho-beta-D-ribosyl)glycinamide + L-glutamine + ATP + H2O = 2-formamido-N(1)-(5-O-phospho-beta-D-ribosyl)acetamidine + L-glutamate + ADP + phosphate + H(+). It participates in purine metabolism; IMP biosynthesis via de novo pathway; 5-amino-1-(5-phospho-D-ribosyl)imidazole from N(2)-formyl-N(1)-(5-phospho-D-ribosyl)glycinamide: step 1/2. Part of the phosphoribosylformylglycinamidine synthase complex involved in the purines biosynthetic pathway. Catalyzes the ATP-dependent conversion of formylglycinamide ribonucleotide (FGAR) and glutamine to yield formylglycinamidine ribonucleotide (FGAM) and glutamate. The FGAM synthase complex is composed of three subunits. PurQ produces an ammonia molecule by converting glutamine to glutamate. PurL transfers the ammonia molecule to FGAR to form FGAM in an ATP-dependent manner. PurS interacts with PurQ and PurL and is thought to assist in the transfer of the ammonia molecule from PurQ to PurL. This Novosphingobium aromaticivorans (strain ATCC 700278 / DSM 12444 / CCUG 56034 / CIP 105152 / NBRC 16084 / F199) protein is Phosphoribosylformylglycinamidine synthase subunit PurL.